Here is a 401-residue protein sequence, read N- to C-terminus: 8-amino-7-oxononanoate synthase (401 aa).

Arginine 24 is a binding site for substrate. Residue 111–112 (GF) participates in pyridoxal 5'-phosphate binding. Histidine 137 is a binding site for substrate. Pyridoxal 5'-phosphate-binding residues include serine 183, histidine 211, and threonine 240. Lysine 243 bears the N6-(pyridoxal phosphate)lysine mark. Residue threonine 357 participates in substrate binding.

Belongs to the class-II pyridoxal-phosphate-dependent aminotransferase family. BioF subfamily. In terms of assembly, homodimer. Pyridoxal 5'-phosphate is required as a cofactor.

The enzyme catalyses 6-carboxyhexanoyl-[ACP] + L-alanine + H(+) = (8S)-8-amino-7-oxononanoate + holo-[ACP] + CO2. The protein operates within cofactor biosynthesis; biotin biosynthesis. In terms of biological role, catalyzes the decarboxylative condensation of pimeloyl-[acyl-carrier protein] and L-alanine to produce 8-amino-7-oxononanoate (AON), [acyl-carrier protein], and carbon dioxide. This Xanthomonas campestris pv. campestris (strain B100) protein is 8-amino-7-oxononanoate synthase.